A 310-amino-acid polypeptide reads, in one-letter code: Glycine--tRNA ligase alpha subunit (310 aa).

It belongs to the class-II aminoacyl-tRNA synthetase family. Tetramer of two alpha and two beta subunits.

Its subcellular location is the cytoplasm. It carries out the reaction tRNA(Gly) + glycine + ATP = glycyl-tRNA(Gly) + AMP + diphosphate. In Agrobacterium fabrum (strain C58 / ATCC 33970) (Agrobacterium tumefaciens (strain C58)), this protein is Glycine--tRNA ligase alpha subunit.